The chain runs to 328 residues: BURP domain-containing protein 11 (328 aa).

Residues 74–318 enclose the BURP domain; sequence FFFRDALRPG…TKLSIVWVPR (245 aa).

Expressed in roots.

This is BURP domain-containing protein 11 (BURP11) from Oryza sativa subsp. japonica (Rice).